The primary structure comprises 1063 residues: Endo-1,4-beta-xylanase 2 (1063 aa).

4 consecutive CBM-cenC domains span residues Asn-5–Pro-146, Asn-183–Pro-313, Asn-348–Pro-482, and Asn-517–Ser-662. The GH10 domain occupies Ser-711–Ile-1006. Glu-840 acts as the Proton donor in catalysis. Catalysis depends on Glu-941, which acts as the Nucleophile.

This sequence belongs to the glycosyl hydrolase 10 (cellulase F) family.

It catalyses the reaction Endohydrolysis of (1-&gt;4)-beta-D-xylosidic linkages in xylans.. The protein operates within glycan degradation; xylan degradation. Functionally, binds to and hydrolyzes insoluble and soluble xylan substrates. This Arabidopsis thaliana (Mouse-ear cress) protein is Endo-1,4-beta-xylanase 2.